The following is a 201-amino-acid chain: uncharacterized protein (201 aa).

The interval 53-74 is disordered; it reads PKKNTAHKNSTTSTVASSGNTT. A compositionally biased stretch (polar residues) spans 59–74; the sequence is HKNSTTSTVASSGNTT. In terms of domain architecture, bHLH spans 88–136; that stretch reads AKRLSHKEVERRRREAISEGIKELANIVPGCEKNKGSILQRTAQYIRSL.

It is found in the nucleus. This is an uncharacterized protein from Schizosaccharomyces pombe (strain 972 / ATCC 24843) (Fission yeast).